The following is a 507-amino-acid chain: RNA-splicing ligase RtcB homolog (507 aa).

The Mn(2+) site is built by Asp121, Cys124, His229, His261, and His355. Residue Asn228 to Glu232 coordinates GMP. Residues His355–Asn356, Gly404–Met407, Ser411, His430–Gly433, and Lys506 each bind GMP. The active-site GMP-histidine intermediate is His430.

It belongs to the RtcB family. In terms of assembly, catalytic component of the tRNA-splicing ligase complex. The cofactor is Mn(2+).

It carries out the reaction a 3'-end 3'-phospho-ribonucleotide-RNA + a 5'-end dephospho-ribonucleoside-RNA + GTP = a ribonucleotidyl-ribonucleotide-RNA + GMP + diphosphate. The enzyme catalyses a 3'-end 2',3'-cyclophospho-ribonucleotide-RNA + a 5'-end dephospho-ribonucleoside-RNA + GTP + H2O = a ribonucleotidyl-ribonucleotide-RNA + GMP + diphosphate + H(+). In terms of biological role, catalytic subunit of the tRNA-splicing ligase complex that acts by directly joining spliced tRNA halves to mature-sized tRNAs by incorporating the precursor-derived splice junction phosphate into the mature tRNA as a canonical 3',5'-phosphodiester. May act as an RNA ligase with broad substrate specificity, and may function toward other RNAs. This Plasmodium yoelii yoelii protein is RNA-splicing ligase RtcB homolog.